The following is a 146-amino-acid chain: Large ribosomal subunit protein uL15 (146 aa).

Over residues 1–13 (MKLHELKPAEGSR) the composition is skewed to basic and acidic residues. The disordered stretch occupies residues 1-65 (MKLHELKPAE…PLYRRLPKRG (65 aa)). 2 stretches are compositionally biased toward gly residues: residues 21-31 (RGIGSGNGKTA) and 42-52 (SGGGVRPGFEG).

The protein belongs to the universal ribosomal protein uL15 family. As to quaternary structure, part of the 50S ribosomal subunit.

Functionally, binds to the 23S rRNA. The chain is Large ribosomal subunit protein uL15 from Halalkalibacterium halodurans (strain ATCC BAA-125 / DSM 18197 / FERM 7344 / JCM 9153 / C-125) (Bacillus halodurans).